A 397-amino-acid chain; its full sequence is 16-O-methyltransferase bsc6 (397 aa).

Residue D262 coordinates S-adenosyl-L-methionine. The Proton acceptor role is filled by H302.

It belongs to the class I-like SAM-binding methyltransferase superfamily. Cation-independent O-methyltransferase family. Requires S-adenosyl-L-methionine as cofactor.

The protein operates within mycotoxin biosynthesis. Its function is as follows. 16-O-methyltransferase; part of the gene cluster that mediates the biosynthesis of the diterpene glucoside brassicicene C. In the first step of the brassicicene C biosynthesis, the bifunctional diterpene synthase bsc8 that possesses both prenyl transferase and terpene cyclase activity, converts isopentenyl diphosphate and dimethylallyl diphosphate into geranylgeranyl diphosphate (GGDP) that is further converted into fusicocca-2,10(14)-diene, the first precursor for brassicicene C. Fusicocca-2,10(14)-diene is then substrate of cytochrome P450 monooxygenase bsc1 for hydroxylation at the C-8 position. Oxidation at C-16 position to aldehyde is then catalyzed by the cytochrome P450 monooyxygenase bsc7, yielding fusicocca-2,10(14)-diene-8-beta,16-diol. Follows the isomerization of the double bond and reduction of aldehyde to alcohol catalyzed by the short-chain dehydrogenase/reductase bsc3 to yield the diol compound fusicocca-1,10(14)-diene-8 beta,16-diol. The next step is the oxidation at the C-3 position of fusicocca-2,10(14)-diene-8-beta,16-diol catalyzed by the alpha-ketoglutarate dependent dioxygenase bsc9, to produce a triol compound. Methylation of the hydroxy group at position 16 is performed by the methyltransferase bsc6. 16-O-methylation is followed by oxidation at the C-13 position to ketone and an alkyl shift of the methyl group leads to brassicicene C. Although the probable acetyltransferase bsc4 is included in the gene cluster, no acetylation reactions are necessary for brassicicene C biosynthesis. However, the fact that brassicicene E, which is a structurally related compound having an acetoxy group at position 12, was previously isolated from another strain of A.brassicicola suggests that the ATCC 96836 strain might also produce a small amount of brassicicene E. The protein is 16-O-methyltransferase bsc6 of Alternaria brassicicola (Dark leaf spot agent).